The chain runs to 489 residues: Rhamnulokinase (489 aa).

13 to 17 contributes to the ATP binding site; that stretch reads ASSGR. Cys68 and Cys222 form a disulfide bridge. Residues Gly83 and 236 to 238 each bind substrate; that span reads HDT. Asp237 functions as the Proton acceptor in the catalytic mechanism. Thr259 is a binding site for ATP. Asn296 contributes to the substrate binding site. An ATP-binding site is contributed by Gln304. Residues Cys353 and Cys370 are joined by a disulfide bond. Gly402 contributes to the ATP binding site. Cys413 and Cys417 form a disulfide bridge.

Belongs to the rhamnulokinase family. Monomer. Mg(2+) serves as cofactor.

The catalysed reaction is L-rhamnulose + ATP = L-rhamnulose 1-phosphate + ADP + H(+). It functions in the pathway carbohydrate degradation; L-rhamnose degradation; glycerone phosphate from L-rhamnose: step 2/3. In terms of biological role, involved in the catabolism of L-rhamnose (6-deoxy-L-mannose). Catalyzes the transfer of the gamma-phosphate group from ATP to the 1-hydroxyl group of L-rhamnulose to yield L-rhamnulose 1-phosphate. The protein is Rhamnulokinase of Escherichia coli (strain K12 / DH10B).